The following is a 429-amino-acid chain: Adenylosuccinate synthetase (429 aa).

Residues 12-18 (GDEGKGK) and 40-42 (GHT) contribute to the GTP site. Residue D13 is the Proton acceptor of the active site. Positions 13 and 40 each coordinate Mg(2+). IMP is bound by residues 13–16 (DEGK), 38–41 (NAGH), T128, R142, Q223, T238, and R302. Residue H41 is the Proton donor of the active site. 298–304 (TTTGRPR) contacts substrate. Residues R304, 330–332 (SID), and 412–414 (SVG) contribute to the GTP site.

This sequence belongs to the adenylosuccinate synthetase family. As to quaternary structure, homodimer. The cofactor is Mg(2+).

It localises to the cytoplasm. The enzyme catalyses IMP + L-aspartate + GTP = N(6)-(1,2-dicarboxyethyl)-AMP + GDP + phosphate + 2 H(+). Its pathway is purine metabolism; AMP biosynthesis via de novo pathway; AMP from IMP: step 1/2. Functionally, plays an important role in the de novo pathway of purine nucleotide biosynthesis. Catalyzes the first committed step in the biosynthesis of AMP from IMP. This Bacillus cereus (strain ATCC 10987 / NRS 248) protein is Adenylosuccinate synthetase.